The chain runs to 158 residues: D-aminoacyl-tRNA deacylase (158 aa).

The short motif at Gly-143–Pro-144 is the Gly-cisPro motif, important for rejection of L-amino acids element.

This sequence belongs to the DTD family. In terms of assembly, homodimer.

It is found in the cytoplasm. The enzyme catalyses glycyl-tRNA(Ala) + H2O = tRNA(Ala) + glycine + H(+). It catalyses the reaction a D-aminoacyl-tRNA + H2O = a tRNA + a D-alpha-amino acid + H(+). In terms of biological role, an aminoacyl-tRNA editing enzyme that deacylates mischarged D-aminoacyl-tRNAs. Also deacylates mischarged glycyl-tRNA(Ala), protecting cells against glycine mischarging by AlaRS. Acts via tRNA-based rather than protein-based catalysis; rejects L-amino acids rather than detecting D-amino acids in the active site. By recycling D-aminoacyl-tRNA to D-amino acids and free tRNA molecules, this enzyme counteracts the toxicity associated with the formation of D-aminoacyl-tRNA entities in vivo and helps enforce protein L-homochirality. This is D-aminoacyl-tRNA deacylase from Solidesulfovibrio magneticus (strain ATCC 700980 / DSM 13731 / RS-1) (Desulfovibrio magneticus).